A 287-amino-acid polypeptide reads, in one-letter code: ATP synthase gamma chain (287 aa).

The protein belongs to the ATPase gamma chain family. F-type ATPases have 2 components, CF(1) - the catalytic core - and CF(0) - the membrane proton channel. CF(1) has five subunits: alpha(3), beta(3), gamma(1), delta(1), epsilon(1). CF(0) has three main subunits: a, b and c.

It localises to the cell inner membrane. Functionally, produces ATP from ADP in the presence of a proton gradient across the membrane. The gamma chain is believed to be important in regulating ATPase activity and the flow of protons through the CF(0) complex. The protein is ATP synthase gamma chain of Geobacter sp. (strain M21).